The sequence spans 354 residues: Fructose-bisphosphate aldolase (354 aa).

Ser61 is a binding site for D-glyceraldehyde 3-phosphate. The active-site Proton donor is Asp104. Residues His105, Asp139, Glu169, and His221 each coordinate Zn(2+). Gly222 contributes to the dihydroxyacetone phosphate binding site. Position 260 (His260) interacts with Zn(2+). Residues 261–263 and 282–285 each bind dihydroxyacetone phosphate; these read GGS and NIDT.

This sequence belongs to the class II fructose-bisphosphate aldolase family. As to quaternary structure, homodimer. Requires Zn(2+) as cofactor.

The catalysed reaction is beta-D-fructose 1,6-bisphosphate = D-glyceraldehyde 3-phosphate + dihydroxyacetone phosphate. Its pathway is carbohydrate degradation; glycolysis; D-glyceraldehyde 3-phosphate and glycerone phosphate from D-glucose: step 4/4. Functionally, catalyzes the aldol condensation of dihydroxyacetone phosphate (DHAP or glycerone-phosphate) with glyceraldehyde 3-phosphate (G3P) to form fructose 1,6-bisphosphate (FBP) in gluconeogenesis and the reverse reaction in glycolysis. In Campylobacter jejuni subsp. jejuni serotype O:23/36 (strain 81-176), this protein is Fructose-bisphosphate aldolase (fba).